Reading from the N-terminus, the 708-residue chain is Potassium-transporting ATPase ATP-binding subunit 2 (708 aa).

A disordered region spans residues 1-23 (MRSPSRLPHETRDSRQRTPKTDM). The segment covering 7–23 (LPHETRDSRQRTPKTDM) has biased composition (basic and acidic residues). Transmembrane regions (helical) follow at residues 49-69 (MFIV…PNLF), 84-104 (GLIT…EAVA), 235-255 (IALT…VATM), and 283-303 (SIAI…GGLL). Aspartate 339 serves as the catalytic 4-aspartylphosphate intermediate. ATP-binding positions include aspartate 376, glutamate 380, 407–414 (FSAKTRMS), and lysine 426. 2 residues coordinate Mg(2+): aspartate 549 and aspartate 553. The next 3 membrane-spanning stretches (helical) occupy residues 619 to 639 (FAIL…IMGL), 645 to 665 (AIIS…PLAL), and 683 to 703 (IFIY…LIDV).

This sequence belongs to the cation transport ATPase (P-type) (TC 3.A.3) family. Type IA subfamily. As to quaternary structure, the system is composed of three essential subunits: KdpA, KdpB and KdpC.

It localises to the cell inner membrane. It carries out the reaction K(+)(out) + ATP + H2O = K(+)(in) + ADP + phosphate + H(+). Functionally, part of the high-affinity ATP-driven potassium transport (or Kdp) system, which catalyzes the hydrolysis of ATP coupled with the electrogenic transport of potassium into the cytoplasm. This subunit is responsible for energy coupling to the transport system and for the release of the potassium ions to the cytoplasm. The polypeptide is Potassium-transporting ATPase ATP-binding subunit 2 (Nostoc sp. (strain PCC 7120 / SAG 25.82 / UTEX 2576)).